The sequence spans 485 residues: Glutamate--tRNA ligase (485 aa).

A 'HIGH' region motif is present at residues proline 11–asparagine 21. Residues cysteine 108, cysteine 110, cysteine 135, and aspartate 137 each coordinate Zn(2+). The 'KMSKS' region signature appears at lysine 252–arginine 256. Position 255 (lysine 255) interacts with ATP.

This sequence belongs to the class-I aminoacyl-tRNA synthetase family. Glutamate--tRNA ligase type 1 subfamily. As to quaternary structure, monomer. It depends on Zn(2+) as a cofactor.

It localises to the cytoplasm. The enzyme catalyses tRNA(Glu) + L-glutamate + ATP = L-glutamyl-tRNA(Glu) + AMP + diphosphate. Catalyzes the attachment of glutamate to tRNA(Glu) in a two-step reaction: glutamate is first activated by ATP to form Glu-AMP and then transferred to the acceptor end of tRNA(Glu). The sequence is that of Glutamate--tRNA ligase from Clostridium botulinum (strain Okra / Type B1).